The sequence spans 309 residues: Probable manganese-dependent inorganic pyrophosphatase (309 aa).

6 residues coordinate Mn(2+): histidine 9, aspartate 13, aspartate 15, aspartate 75, histidine 97, and aspartate 149.

The protein belongs to the PPase class C family. It depends on Mn(2+) as a cofactor.

The protein resides in the cytoplasm. The catalysed reaction is diphosphate + H2O = 2 phosphate + H(+). The chain is Probable manganese-dependent inorganic pyrophosphatase from Bacillus cereus (strain ZK / E33L).